We begin with the raw amino-acid sequence, 621 residues long: Auxin response factor 13 (621 aa).

The TF-B3 DNA-binding region spans 124 to 228 (FSKILTASDV…ELRFGIRRAK (105 aa)). In terms of domain architecture, PB1 spans 508-600 (RSRIKVHMQG…EIKKMKLKNK (93 aa)).

This sequence belongs to the ARF family. In terms of assembly, homodimers and heterodimers.

The protein resides in the nucleus. In terms of biological role, auxin response factors (ARFs) are transcriptional factors that bind specifically to the DNA sequence 5'-TGTCTC-3' found in the auxin-responsive promoter elements (AuxREs). Could act as transcriptional activator or repressor. Formation of heterodimers with Aux/IAA proteins may alter their ability to modulate early auxin response genes expression. The polypeptide is Auxin response factor 13 (ARF13) (Arabidopsis thaliana (Mouse-ear cress)).